Here is a 483-residue protein sequence, read N- to C-terminus: Pre-glycoprotein polyprotein GP complex (483 aa).

Gly-2 carries the N-myristoyl glycine; by host lipid modification. Topologically, residues 2 to 17 (GQFISFMQEIPIFLQE) are extracellular. A helical membrane pass occupies residues 18 to 32 (ALNIALVAVSLICIV). Residue Lys-33 is a topological domain, cytoplasmic. A helical membrane pass occupies residues 34 to 53 (GLVNLYRCGLFQLMVFLVLA). Extracellular segments lie at residues 54-58 (GRSCS) and 59-422 (EETF…TLVD). Zn(2+) is bound at residue Cys-57. Residues Asn-83 and Asn-95 are each glycosylated (N-linked (GlcNAc...) asparagine; by host). Intrachain disulfides connect Cys-92-Cys-224, Cys-134-Cys-162, Cys-205-Cys-211, Cys-269-Cys-282, Cys-291-Cys-300, and Cys-354-Cys-375. 2 N-linked (GlcNAc...) asparagine; by host glycosylation sites follow: Asn-164 and Asn-176. 4 N-linked (GlcNAc...) asparagine; by host glycosylation sites follow: Asn-355, Asn-363, Asn-380, and Asn-385. Residues 423-443 (ICFWSTVFFTSTLFLHLIGFP) traverse the membrane as a helical segment. Topologically, residues 444-483 (THEHIRGEGCPLPHRLNSMGGCRCGKYLPLKKPTIWHRRH) are cytoplasmic. The Zn(2+) site is built by His-445, His-447, Cys-453, His-457, Cys-465, Cys-467, and His-483.

This sequence belongs to the arenaviridae GPC protein family. As to quaternary structure, homotetramer; disulfide-linked. In terms of assembly, homotetramer. GP2 homotetramers bind through ionic interactions with GP1 homotetramers to form the GP complex together with the stable signal peptide. The GP-C polyprotein interacts with the host protease MBTPS1/SKI-1 resulting in the polyprotein processing. In terms of processing, specific enzymatic cleavages in vivo yield mature proteins. GP-C polyprotein is cleaved in the endoplasmic reticulum by the host protease MBTPS1. Only cleaved glycoprotein is incorporated into virions. Post-translationally, the SSP remains stably associated with the GP complex following cleavage by signal peptidase and plays crucial roles in the trafficking of GP through the secretory pathway. Myristoylation is necessary for GP2-mediated fusion activity.

It is found in the virion membrane. The protein resides in the host endoplasmic reticulum membrane. The protein localises to the host Golgi apparatus membrane. It localises to the host cell membrane. Functionally, class I viral fusion protein that directs fusion of viral and host endosomal membranes, leading to delivery of the nucleocapsid into the cytoplasm. Membrane fusion is mediated by irreversible conformational changes induced upon acidification in the endosome. Its function is as follows. Stable signal peptide (SSP): cleaved and functions as a signal peptide. In addition, it is also retained as the third component of the GP complex. The SSP is required for efficient glycoprotein expression, post-translational maturation cleavage of GP1 and GP2, glycoprotein transport to the cell surface plasma membrane, formation of infectious virus particles, and acid pH-dependent glycoprotein-mediated cell fusion. In terms of biological role, interacts with the host receptor. The sequence is that of Pre-glycoprotein polyprotein GP complex from Artibeus (neotropical fruit bats).